Consider the following 221-residue polypeptide: Hypoxanthine-guanine phosphoribosyltransferase (221 aa).

Ser2 is modified (N-acetylserine). GMP contacts are provided by residues Lys85, 110-118 (DEVDDTRTT), Lys159, and 188-194 (WYAYPWE). Asp114 serves as the catalytic Proton acceptor.

Belongs to the purine/pyrimidine phosphoribosyltransferase family. As to quaternary structure, dimer. Mg(2+) is required as a cofactor.

The protein resides in the cytoplasm. It localises to the nucleus. It catalyses the reaction IMP + diphosphate = hypoxanthine + 5-phospho-alpha-D-ribose 1-diphosphate. It carries out the reaction GMP + diphosphate = guanine + 5-phospho-alpha-D-ribose 1-diphosphate. Its pathway is purine metabolism; IMP biosynthesis via salvage pathway; IMP from hypoxanthine: step 1/1. Its activity is regulated as follows. Subject to feedback inhibition by GMP. Functionally, converts guanine to guanosine monophosphate, and hypoxanthine to inosine monophosphate. Transfers the 5-phosphoribosyl group from 5-phosphoribosylpyrophosphate onto the purine. Plays a central role in the generation of purine nucleotides through the purine salvage pathway. This chain is Hypoxanthine-guanine phosphoribosyltransferase (HPT1), found in Saccharomyces cerevisiae (strain ATCC 204508 / S288c) (Baker's yeast).